The sequence spans 416 residues: Choline/ethanolaminephosphotransferase 1 (416 aa).

A disordered region spans residues 1–20; it reads MSGHRSTRKRCGDSHPESPV. Serine 18 carries the post-translational modification Phosphoserine. Threonine 40 bears the Phosphothreonine mark. Asparagine 86 serves as a coordination point for CDP-choline. 2 helical membrane-spanning segments follow: residues 89–108 and 116–133; these read TIIGLSINICTTILLVFYCP and LWAYIACACGLFIYQSLD. Aspartate 133 provides a ligand contact to Mg(2+). N-linked (GlcNAc...) asparagine glycosylation is present at asparagine 144. Residue glutamate 151 participates in CDP-choline binding. Aspartate 154 is a Mg(2+) binding site. The Proton acceptor role is filled by histidine 155. The next 8 helical transmembrane spans lie at 156 to 176, 180 to 199, 210 to 230, 246 to 267, 286 to 306, 315 to 334, 349 to 363, and 368 to 388; these read GCDSLSTVFVVLGTCIAVQLG, DWMFFCCFAGTFMFYCAHWQ, IIDVTEVQIFIIIMHLLAVIG, MKLFPALCTVAGTIFSCTNYFR, VLSPFLHIGSVITLAVMIYKK, HPCLYILTFGFVSAKITNKL, TAFIGPALLFLDQYF, and DEYIVLWIALVFSFFDLIRYC. Aspartate 158 contacts Mg(2+).

The protein belongs to the CDP-alcohol phosphatidyltransferase class-I family. As to quaternary structure, homodimer. Mg(2+) is required as a cofactor. Requires Mn(2+) as cofactor.

Its subcellular location is the endoplasmic reticulum membrane. The protein localises to the nucleus membrane. It carries out the reaction CDP-ethanolamine + a 1,2-diacyl-sn-glycerol = a 1,2-diacyl-sn-glycero-3-phosphoethanolamine + CMP + H(+). It catalyses the reaction CDP-choline + a 1,2-diacyl-sn-glycerol = a 1,2-diacyl-sn-glycero-3-phosphocholine + CMP + H(+). The enzyme catalyses 1-O-alkyl-2-acyl-sn-glycerol + CDP-choline = a 1-O-alkyl-2-acyl-sn-glycero-3-phosphocholine + CMP + H(+). The catalysed reaction is a 1-O-(1Z-alkenyl)-2-acyl-sn-glycerol + CDP-choline = a 1-O-(1Z-alkenyl)-2-acyl-sn-glycero-3-phosphocholine + CMP + H(+). It carries out the reaction 1,2-dioctanoyl-sn-glycerol + CDP-choline = 1,2-dioctanoyl-sn-glycero-3-phosphocholine + CMP + H(+). It catalyses the reaction 1,2-didecanoyl-sn-glycerol + CDP-choline = 1,2-didecanoyl-sn-glycero-3-phosphocholine + CMP + H(+). The enzyme catalyses CDP-choline + 1,2-di-(9Z-octadecenoyl)-sn-glycerol = 1,2-di-(9Z-octadecenoyl)-sn-glycero-3-phosphocholine + CMP + H(+). The catalysed reaction is 1-hexadecanoyl-2-(9Z-octadecenoyl)-sn-glycerol + CDP-choline = 1-hexadecanoyl-2-(9Z-octadecenoyl)-sn-glycero-3-phosphocholine + CMP + H(+). It carries out the reaction CDP-ethanolamine + 1,2-di-(9Z-octadecenoyl)-sn-glycerol = 1,2-di-(9Z-octadecenoyl)-sn-glycero-3-phosphoethanolamine + CMP + H(+). It catalyses the reaction 1-hexadecanoyl-2-(9Z-octadecenoyl)-sn-glycerol + CDP-ethanolamine = 1-hexadecanoyl-2-(9Z-octadecenoyl)-sn-glycero-3-phosphoethanolamine + CMP + H(+). The enzyme catalyses 1-hexadecanoyl-2-(4Z,7Z,10Z,13Z,16Z,19Z-docosahexaenoyl)-sn-glycerol + CDP-choline = 1-hexadecanoyl-2-(4Z,7Z,10Z,13Z,16Z,19Z-docosahexaenoyl)-sn-glycero-3-phosphocholine + CMP + H(+). The catalysed reaction is 1,2-di-(9Z-hexadecenoyl)-sn-glycerol + CDP-choline = 1,2-di-(9Z-hexadecenoyl)-sn-glycero-3-phosphocholine + CMP + H(+). It carries out the reaction 1,2-di-(9Z-hexadecenoyl)-sn-glycerol + CDP-ethanolamine = 1,2-di-(9Z-hexadecenoyl)-sn-glycero-3-phosphoethanolamine + CMP + H(+). It catalyses the reaction 1-O-hexadecyl-2-acetyl-sn-glycerol + CDP-choline = 1-O-hexadecyl-2-acetyl-sn-glycero-3-phosphocholine + CMP + H(+). The enzyme catalyses 1-O-hexadecyl-2-(5Z,8Z,11Z,14Z-eicosatetraenoyl)-sn-glycerol + CDP-choline = 1-O-hexadecyl-2-(5Z,8Z,11Z,14Z)-eicosatetraenoyl-sn-glycero-3-phosphocholine + CMP + H(+). Its pathway is phospholipid metabolism; phosphatidylethanolamine biosynthesis; phosphatidylethanolamine from ethanolamine: step 3/3. It functions in the pathway phospholipid metabolism; phosphatidylcholine biosynthesis; phosphatidylcholine from phosphocholine: step 2/2. Functionally, catalyzes both phosphatidylcholine and phosphatidylethanolamine biosynthesis from CDP-choline and CDP-ethanolamine, respectively. Involved in protein-dependent process of phospholipid transport to distribute phosphatidyl choline to the lumenal surface. Has a higher cholinephosphotransferase activity than ethanolaminephosphotransferase activity. The polypeptide is Choline/ethanolaminephosphotransferase 1 (Rattus norvegicus (Rat)).